The primary structure comprises 141 residues: Hemoglobin subunit alpha (141 aa).

Residues 1 to 141 form the Globin domain; sequence VLSPEDKNHV…VSTVLTSKYR (141 aa). A Phosphoserine modification is found at Ser3. Lys7 bears the N6-succinyllysine mark. Lys16 is subject to N6-acetyllysine; alternate. At Lys16 the chain carries N6-succinyllysine; alternate. Residue Tyr24 is modified to Phosphotyrosine. Phosphoserine is present on Ser35. Position 40 is an N6-succinyllysine (Lys40). Residue Ser49 is modified to Phosphoserine. Residue His58 coordinates O2. His87 is a heme b binding site. The residue at position 102 (Ser102) is a Phosphoserine. Phosphothreonine is present on Thr108. Phosphoserine occurs at positions 124 and 131. Phosphothreonine is present on residues Thr134 and Thr137. At Ser138 the chain carries Phosphoserine.

This sequence belongs to the globin family. Heterotetramer of two alpha chains and two beta chains. In terms of tissue distribution, red blood cells.

In terms of biological role, involved in oxygen transport from the lung to the various peripheral tissues. Its function is as follows. Hemopressin acts as an antagonist peptide of the cannabinoid receptor CNR1. Hemopressin-binding efficiently blocks cannabinoid receptor CNR1 and subsequent signaling. The chain is Hemoglobin subunit alpha (HBA) from Spalax ehrenbergi (Middle East blind mole rat).